Reading from the N-terminus, the 577-residue chain is MKTSQLFYKTSKNANKEAAVLSYELLEKAGYIFKTAKGIYTYTPLFWRVALKMMDIVREELNAIGGQELVLPILHPAELWQKTGRWEAFRSEGLLYTLTDREDKELCLAPTHEEVVSMFVSQWLSGRKQLPIHLYQIATKFRDEIRPRFGLMRAREFLMEDSYTFSDSPEQMNEQYAKLRQAYQNIFDRLEIKYVIVEADGGKIGKGKSEEFHVLCSLGEDTICVSGAYGANIEAAVSQPPQYTYDKEHLPIEEVATPDVRTMEHLQDFFSLPSHKIIKTLVVKLSYGEKDKFVAISIRGDRQINLTKIRSKLNADECILASDEELQQHLGTEKGFIGPLNCPIELYADETTRCMTNFICAGNTKDKHYKNVNWDRDIPRPEYGDFLLAEAGDLCPANGNAPYEVFEGVEVAHIFNLGTRYTECFEVGFQNEQEEQQTCWMGTYGIGIGRTLAACIEQLADDRGIVWPKAIAPFDIAILYNGGDAASQEAAEKIYKDLQNYGYAPLLDDRNERLGFKLKDSDLIGIPYKLILGKTFQNSGVLEIESRSREKFFVEPKDFFNWCKNYFPKPRGFSPIS.

It belongs to the class-II aminoacyl-tRNA synthetase family. ProS type 1 subfamily. Homodimer.

Its subcellular location is the cytoplasm. It catalyses the reaction tRNA(Pro) + L-proline + ATP = L-prolyl-tRNA(Pro) + AMP + diphosphate. Catalyzes the attachment of proline to tRNA(Pro) in a two-step reaction: proline is first activated by ATP to form Pro-AMP and then transferred to the acceptor end of tRNA(Pro). As ProRS can inadvertently accommodate and process non-cognate amino acids such as alanine and cysteine, to avoid such errors it has two additional distinct editing activities against alanine. One activity is designated as 'pretransfer' editing and involves the tRNA(Pro)-independent hydrolysis of activated Ala-AMP. The other activity is designated 'posttransfer' editing and involves deacylation of mischarged Ala-tRNA(Pro). The misacylated Cys-tRNA(Pro) is not edited by ProRS. The chain is Proline--tRNA ligase from Chlamydia caviae (strain ATCC VR-813 / DSM 19441 / 03DC25 / GPIC) (Chlamydophila caviae).